A 121-amino-acid chain; its full sequence is Ribosome-binding factor A (121 aa).

This sequence belongs to the RbfA family. Monomer. Binds 30S ribosomal subunits, but not 50S ribosomal subunits or 70S ribosomes.

Its subcellular location is the cytoplasm. Its function is as follows. One of several proteins that assist in the late maturation steps of the functional core of the 30S ribosomal subunit. Associates with free 30S ribosomal subunits (but not with 30S subunits that are part of 70S ribosomes or polysomes). Required for efficient processing of 16S rRNA. May interact with the 5'-terminal helix region of 16S rRNA. In Clostridium acetobutylicum (strain ATCC 824 / DSM 792 / JCM 1419 / IAM 19013 / LMG 5710 / NBRC 13948 / NRRL B-527 / VKM B-1787 / 2291 / W), this protein is Ribosome-binding factor A.